A 378-amino-acid polypeptide reads, in one-letter code: Heme chaperone HemW (378 aa).

A Radical SAM core domain is found at 1–237 (MVKLPPLSLY…LTAAGYQQYE (237 aa)). Tyrosine 10 is a binding site for S-adenosyl-L-methionine. [4Fe-4S] cluster-binding residues include cysteine 16, cysteine 20, and cysteine 23. S-adenosyl-L-methionine is bound by residues glycine 66, 67–68 (GT), glutamate 99, glutamine 126, arginine 138, and aspartate 163.

The protein belongs to the anaerobic coproporphyrinogen-III oxidase family. HemW subfamily. Binding of the [4Fe-4S] cofactor promotes dimerization. The cofactor is [4Fe-4S] cluster.

Its subcellular location is the cytoplasm. Its function is as follows. Probably acts as a heme chaperone, transferring heme to the NarI subunit of the respiratory enzyme nitrate reductase; transfer may be stimulated by NADH. Binds one molecule of heme per monomer, possibly covalently. Heme binding is not affected by either [4Fe-4S] or S-adenosyl-L-methionine (SAM)-binding. Does not have coproporphyrinogen III dehydrogenase activity in vitro. Binds 1 [4Fe-4S] cluster. The cluster is coordinated with 3 cysteines and an exchangeable S-adenosyl-L-methionine. The sequence is that of Heme chaperone HemW from Escherichia coli (strain K12).